A 431-amino-acid chain; its full sequence is Enolase (431 aa).

Residue Q167 coordinates (2R)-2-phosphoglycerate. E209 (proton donor) is an active-site residue. Mg(2+)-binding residues include D246, E289, and D316. Residues K341, R370, S371, and K392 each contribute to the (2R)-2-phosphoglycerate site. The active-site Proton acceptor is K341.

It belongs to the enolase family. As to quaternary structure, component of the RNA degradosome, a multiprotein complex involved in RNA processing and mRNA degradation. Mg(2+) is required as a cofactor.

The protein resides in the cytoplasm. It localises to the secreted. Its subcellular location is the cell surface. The catalysed reaction is (2R)-2-phosphoglycerate = phosphoenolpyruvate + H2O. The protein operates within carbohydrate degradation; glycolysis; pyruvate from D-glyceraldehyde 3-phosphate: step 4/5. Functionally, catalyzes the reversible conversion of 2-phosphoglycerate (2-PG) into phosphoenolpyruvate (PEP). It is essential for the degradation of carbohydrates via glycolysis. The sequence is that of Enolase from Shewanella halifaxensis (strain HAW-EB4).